The chain runs to 88 residues: ATP synthase subunit c (88 aa).

Helical transmembrane passes span 10-30 (ILAASAIGAGLAMIAGLGPGI) and 68-88 (GIYSLVIALILLFANPLIRLL).

Belongs to the ATPase C chain family. In terms of assembly, F-type ATPases have 2 components, F(1) - the catalytic core - and F(0) - the membrane proton channel. F(1) has five subunits: alpha(3), beta(3), gamma(1), delta(1), epsilon(1). F(0) has three main subunits: a(1), b(2) and c(10-14). The alpha and beta chains form an alternating ring which encloses part of the gamma chain. F(1) is attached to F(0) by a central stalk formed by the gamma and epsilon chains, while a peripheral stalk is formed by the delta and b chains.

It is found in the cell membrane. Its function is as follows. F(1)F(0) ATP synthase produces ATP from ADP in the presence of a proton or sodium gradient. F-type ATPases consist of two structural domains, F(1) containing the extramembraneous catalytic core and F(0) containing the membrane proton channel, linked together by a central stalk and a peripheral stalk. During catalysis, ATP synthesis in the catalytic domain of F(1) is coupled via a rotary mechanism of the central stalk subunits to proton translocation. Functionally, key component of the F(0) channel; it plays a direct role in translocation across the membrane. A homomeric c-ring of between 10-14 subunits forms the central stalk rotor element with the F(1) delta and epsilon subunits. The sequence is that of ATP synthase subunit c from Alkaliphilus oremlandii (strain OhILAs) (Clostridium oremlandii (strain OhILAs)).